Here is a 2471-residue protein sequence, read N- to C-terminus: Polyprotein P1234 (2471 aa).

An Alphavirus-like MT domain is found at 28–257; that stretch reads EATQVTDNDH…EERILLRSWH (230 aa). Residues 242 to 261 are nsP1 membrane-binding; it reads GSTIYTEERILLRSWHLPNV. A lipid anchor (S-palmitoyl cysteine; by host) is attached at C417. The 152-residue stretch at 688-839 folds into the (+)RNA virus helicase ATP-binding domain; sequence DLVDPPFHEF…HEICTEVYHK (152 aa). 719–726 is a binding site for a ribonucleoside 5'-triphosphate; that stretch reads GVPGSGKS. The (+)RNA virus helicase C-terminal domain maps to 840-988; it reads SISRRCTRTV…LEEWQAEHDA (149 aa). The region spanning 1001 to 1320 is the Peptidase C9 domain; the sequence is DVYQNKVHVC…VVLNNIYQGS (320 aa). Residues 1002 to 1021 form a nucleolus localization signal region; it reads VYQNKVHVCWAKALEPVLAT. The For cysteine protease nsP2 activity role is filled by C1010. Residues 1054-1063 carry the Nuclear export signal motif; sequence TRFFGVDIDS. The For cysteine protease nsP2 activity role is filled by H1079. The Nuclear localization signal motif lies at 1177–1181; that stretch reads PGKRV. The region spanning 1328 to 1486 is the Macro domain; sequence APAYRVIRGD…RIKDAIARKE (159 aa). ADP-D-ribose is bound by residues D1337, N1351, G1359, G1438, V1439, and Y1440. Zn(2+) contacts are provided by C1589, C1591, C1614, and C1632. The disordered stretch occupies residues 1669-1692; it reads RRPAPPVPVPARIPSPRCSPAVSM. A compositionally biased stretch (pro residues) spans 1670-1681; that stretch reads RPAPPVPVPARI. The binding to host G3BP family members stretch occupies residues 1771 to 1783; sequence LITFDSVTDIFEN. Positions 1798–1838 are disordered; sequence IPAPRRRREPETDIQRFDKSEEKPVPKPRTRTAKYKKPPGV. Basic and acidic residues predominate over residues 1805–1822; that stretch reads REPETDIQRFDKSEEKPV. Positions 1823–1834 are enriched in basic residues; the sequence is PKPRTRTAKYKK. The segment at 1835–1851 is binding to host FXR family members; the sequence is PPGVARSISEAELDEFI. The RdRp catalytic domain maps to 2228-2343; the sequence is DAVLETDIAS…KGVKSDALMA (116 aa).

In terms of assembly, interacts with non-structural protein 3. Interacts with RNA-directed RNA polymerase nsP4. Interacts with protease nsP2. interacts with itself. As to quaternary structure, interacts with mRNA-capping enzyme nsP1. Interacts with host DDX1. Interacts with host DDX3. Interacts (via C-terminus) with host FXR1; this interaction inhibits the formation of host stress granules on viral mRNAs and the nsp3-FXR1 complexes bind viral RNAs and probably orchestrate the assembly of viral replication complexes. Interacts (via C-terminus) with host FXR2; this interaction inhibits the formation of host stress granules on viral mRNAs and the nsp3-FXR2 complexes bind viral RNAs and probably orchestrate the assembly of viral replication complexes. Interacts (via C-terminus) with host FMR1; this interaction inhibits the formation of host stress granules on viral mRNAs and the nsp3-FMR1 complexes bind viral RNAs and probably orchestrate the assembly of viral replication complexes. Interacts (via C-terminus) with host G3BP1; this interaction inhibits the formation of host stress granules on viral mRNAs and the nsp3-G3BP1 complexes bind viral RNAs and probably orchestrate the assembly of viral replication complexes. Interacts (via C-terminus) with host G3BP2; this interaction inhibits the formation of host stress granules on viral mRNAs and the nsp3-G3BP2 complexes bind viral RNAs and probably orchestrate the assembly of viral replication complexes. Interacts with mRNA-capping enzyme nsP1. Interacts with protease nsP2. interacts with itself. In terms of assembly, interacts with RNA-directed RNA polymerase nsP4. Interacts with mRNA-capping enzyme nsP1. Interacts with KPNA1/karyopherin-alpha1; this interaction probably allows the active transport of protease nsP2 into the host nucleus. It depends on Mg(2+) as a cofactor. Mn(2+) serves as cofactor. Post-translationally, specific enzymatic cleavages in vivo yield mature proteins. The processing of the polyprotein is temporally regulated. In early stages (1.7 hpi), P1234 is first cleaved in trans through its nsP2 protease activity, releasing P123' and nsP4, which associate to form the early replication complex. At the same time, P1234 is also cut at the nsP1/nsP2 site early in infection but with lower efficiency. After replication of the viral minus-strand RNAs (4 hpi), the polyproteins are cut at the nsP1/nsP2 and nsP2/nsP3 sites very efficiently, preventing accumulation of P123' and P1234 and allowing the formation of the late replication complex. NsP3'/nsP4 site is not cleaved anymore and P34 is produced rather than nsP4. Specific enzymatic cleavages in vivo yield mature proteins. The processing of the polyprotein is temporally regulated. In early stages (1.7 hpi), P123 is cleaved at the nsP1/nsP2 site with low efficiency. After replication of the viral minus-strand RNAs (4 hpi), the polyproteins are cut at the nsP1/nsP2 and nsP2/nsP3 sites very efficiently, preventing accumulation of P123 and allowing the formation of the late replication complex. In terms of processing, specific enzymatic cleavages in vivo yield mature proteins. The processing of the polyprotein is temporally regulated. In early stages (1.7 hpi), P123' is cleaved at the nsP1/nsP2 site with low efficiency. After replication of the viral minus-strand RNAs (4 hpi), the polyproteins are cut at the nsP1/nsP2 and nsP2/nsP3 sites very efficiently, preventing accumulation of P123' and allowing the formation of the late replication complex. Post-translationally, palmitoylated by host palmitoyltransferases ZDHHC2 and ZDHHC19. Phosphorylated by host on serines and threonines. In terms of processing, ubiquitinated; targets the protein for rapid degradation via the ubiquitin system. Nsp4 is present in extremely low quantities due to low frequency of translation through the amber stop-codon and the degradation by the ubiquitin pathway.

The protein resides in the host cytoplasmic vesicle membrane. It localises to the host cell membrane. It is found in the host cell projection. Its subcellular location is the host filopodium. The protein localises to the host nucleus. The protein resides in the host cytoplasm. It carries out the reaction GTP + S-adenosyl-L-methionine = N(7)-methyl-GTP + S-adenosyl-L-homocysteine. It catalyses the reaction N(7)-methyl-GTP + L-histidyl-[protein] = N(tele)-(N(7)-methylguanosine 5'-phospho)-L-histidyl-[protein] + diphosphate. The enzyme catalyses N(tele)-(N(7)-methylguanosine 5'-phospho)-L-histidyl-[protein] + a 5'-end diphospho-(purine-ribonucleoside) in mRNA + H(+) = a 5'-end (N(7)-methyl 5'-triphosphoguanosine)-(purine-ribonucleoside) in mRNA + L-histidyl-[protein]. The catalysed reaction is a 5'-end triphospho-ribonucleoside in mRNA + H2O = a 5'-end diphospho-ribonucleoside in mRNA + phosphate + H(+). It carries out the reaction a ribonucleoside 5'-triphosphate + H2O = a ribonucleoside 5'-diphosphate + phosphate + H(+). It catalyses the reaction ATP + H2O = ADP + phosphate + H(+). The enzyme catalyses RNA(n) + a ribonucleoside 5'-triphosphate = RNA(n+1) + diphosphate. The catalysed reaction is 4-O-(ADP-D-ribosyl)-L-aspartyl-[protein] + H2O = L-aspartyl-[protein] + ADP-D-ribose + H(+). It carries out the reaction 5-O-(ADP-D-ribosyl)-L-glutamyl-[protein] + H2O = L-glutamyl-[protein] + ADP-D-ribose + H(+). It catalyses the reaction RNA(n) + ATP = RNA(n)-3'-adenine ribonucleotide + diphosphate. The enzyme catalyses ADP-alpha-D-ribose 1''-phosphate + H2O = ADP-D-ribose + phosphate. Its activity is regulated as follows. Inhibited by sinefungin. Inactive precursor of the viral replicase, which is activated by cleavages carried out by the viral protease nsP2. Functionally, the early replication complex formed by the polyprotein P123 and nsP4 synthesizes the minus-strand RNAs (antigenome). Polyprotein P123 is a short-lived polyprotein that accumulates during early stage of infection. As soon P123 is cleaved into mature proteins, the plus-strand RNAs synthesis begins. Its function is as follows. The early replication complex formed by the polyprotein P123' and nsP4 synthesizes minus-strand RNAs (antigenome). Polyprotein P123' is a short-lived polyprotein that accumulates during early stage of infection. As soon P123' is cleaved into mature proteins, the plus-strand RNAs synthesis begins. In terms of biological role, cytoplasmic capping enzyme that catalyzes two virus-specific reactions: methyltransferase and nsP1 guanylyltransferase. mRNA-capping is necessary since all viral RNAs are synthesized in the cytoplasm, and host capping enzymes are restricted to the nucleus. The enzymatic reaction involves a covalent link between 7-methyl-GMP and nsP1, whereas eukaryotic capping enzymes form a covalent complex only with GMP. NsP1 capping consists in the following reactions: GTP is first methylated into 7-methyl-GMP and then is covalently linked to nsP1 to form the m7GMp-nsP1 complex from which 7-methyl-GMP complex is transferred to the mRNA to create the cap structure. NsP1 is also needed for the initiation of the minus-strand RNAs synthesis. Probably serves as a membrane anchor for the replication complex composed of nsP1-nsP4. Nsp1 is needed for the initiation of the minus-strand RNAs synthesis. Palmitoylated nsP1 is remodeling host cell cytoskeleton, and induces filopodium-like structure formation at the surface of the host cell. Multifunctional protein whose N-terminus is part of the RNA polymerase complex and displays NTPase, RNA triphosphatase and helicase activities. NTPase and RNA triphosphatase are involved in viral RNA capping and helicase keeps a check on the dsRNA replication intermediates. The C-terminus harbors a protease that specifically cleaves the polyproteins and releases the mature proteins. Required for the shutoff of minus-strand RNAs synthesis. Inhibits host translation to ensure maximal viral gene expression and evade host immune response. Functionally, seems to be essential for minus-strand RNAs and subgenomic 26S mRNAs synthesis. Displays mono-ADP-ribosylhydrolase activity. ADP-ribosylation is a post-translational modification that controls various processes of the host cell and the virus probably needs to revert it for optimal viral replication. Binds proteins of FXR and G3BP families and sequesters them into the viral RNA replication complexes thereby inhibiting the formation of host stress granules on viral mRNAs. The nsp3-FXR and nsp3-G3BP complexes bind viral RNAs and probably orchestrate the assembly of viral replication complexes, thanks to the ability of G3BP and FXR family members to self-assemble and bind DNA. Its function is as follows. Seems to be essential for minus-strand RNAs and subgenomic 26S mRNAs synthesis. Displays mono-ADP-ribosylhydrolase activity. ADP-ribosylation is a post-translational modification that controls various processes of the host cell and the virus probably needs to revert it for optimal viral replication. Binds proteins of FXR and G3BP families and sequesters them into the viral RNA replication complexes thereby inhibiting the formation of host stress granules on viral mRNAs. The nsp3'-FXR and nsp3-G3BP complexes bind viral RNAs and probably orchestrate the assembly of viral replication complexes, thanks to the ability of G3BP and FXR family members to self-assemble and bind DNA. In terms of biological role, RNA dependent RNA polymerase. Replicates genomic and antigenomic RNA by recognizing replications specific signals. The early replication complex formed by the polyprotein P123 and nsP4 synthesizes minus-strand RNAs. The late replication complex composed of fully processed nsP1-nsP4 is responsible for the production of genomic and subgenomic plus-strand RNAs. The polypeptide is Polyprotein P1234 (Eastern equine encephalitis virus (strain PE-0.0155) (EEEV)).